The following is a 622-amino-acid chain: Threonine--tRNA ligase (622 aa).

The tract at residues 1–141 (MKTLLIHSDY…SRKITTERKE (141 aa)) is editing domain. The segment at 199-498 (PHVKYIKEKE…TLENRPPALP (300 aa)) is catalytic. Zn(2+) contacts are provided by Cys291, His343, and His467.

It belongs to the class-II aminoacyl-tRNA synthetase family. In terms of assembly, homodimer. It depends on Zn(2+) as a cofactor.

The protein resides in the cytoplasm. It catalyses the reaction tRNA(Thr) + L-threonine + ATP = L-threonyl-tRNA(Thr) + AMP + diphosphate + H(+). Its function is as follows. Catalyzes the attachment of threonine to tRNA(Thr) in a two-step reaction: L-threonine is first activated by ATP to form Thr-AMP and then transferred to the acceptor end of tRNA(Thr). Also edits incorrectly charged L-seryl-tRNA(Thr). The polypeptide is Threonine--tRNA ligase (Methanococcus maripaludis (strain C6 / ATCC BAA-1332)).